Reading from the N-terminus, the 160-residue chain is Cytochrome c-type biogenesis protein CcmE (160 aa).

The Cytoplasmic portion of the chain corresponds to 1–8 (MNPRRKNR). The helical; Signal-anchor for type II membrane protein transmembrane segment at 9–29 (LILVMLVLVGLGLATALVMYA) threads the bilayer. The Periplasmic portion of the chain corresponds to 30–160 (LRSNIDLFYT…AVGDNSVRPS (131 aa)). Positions 130 and 134 each coordinate heme. A compositionally biased stretch (basic and acidic residues) spans 133–148 (KYTPPEIEDAMKKDHP). A disordered region spans residues 133–160 (KYTPPEIEDAMKKDHPAQAVGDNSVRPS).

Belongs to the CcmE/CycJ family.

The protein localises to the cell inner membrane. In terms of biological role, heme chaperone required for the biogenesis of c-type cytochromes. Transiently binds heme delivered by CcmC and transfers the heme to apo-cytochromes in a process facilitated by CcmF and CcmH. The chain is Cytochrome c-type biogenesis protein CcmE from Erwinia tasmaniensis (strain DSM 17950 / CFBP 7177 / CIP 109463 / NCPPB 4357 / Et1/99).